We begin with the raw amino-acid sequence, 205 residues long: Protein phosphatase inhibitor 2 (205 aa).

Residues 1 to 44 (MAASTASHRPIKGILKNKTSTTSSVVASAEQPRRTVEEELSKKS) form a disordered region. An N-acetylalanine modification is found at alanine 2. Positions 12–17 (KGILKN) are required for binding PPP1CC. Low complexity predominate over residues 19–29 (TSTTSSVVASA). The segment covering 31–44 (QPRRTVEEELSKKS) has biased composition (basic and acidic residues). The segment at 43–55 (KSQKWDEMNILAT) is required for binding PPP1CC. Serine 44 carries the post-translational modification Phosphoserine; by ATM. Threonine 73 is subject to Phosphothreonine; by GSK3. 2 positions are modified to phosphoserine: serine 87 and serine 89. Phosphothreonine occurs at positions 96 and 116. The disordered stretch occupies residues 104-142 (LAAAEGSEPKFRTREQESSGEEDNDLSPEEREKKRQFEM). Residues 110–120 (SEPKFRTREQE) show a composition bias toward basic and acidic residues. A phosphoserine mark is found at serine 121, serine 122, and serine 130. Positions 121–130 (SSGEEDNDLS) are enriched in acidic residues. Positions 131-142 (PEEREKKRQFEM) are enriched in basic and acidic residues. The required for binding PPP1CC catalytic center, displacing metal ions and inhibition of PPP1CC catalytic activity stretch occupies residues 147 to 150 (HYNE). The segment at 163 to 205 (KDLHDDDEDEEMSETADADSMNIEESNQGSTAGDHLQHKSQSS) is disordered. A compositionally biased stretch (acidic residues) spans 167–179 (DDDEDEEMSETAD).

It belongs to the protein phosphatase inhibitor 2 family. In terms of assembly, heterodimer with PP1. In terms of processing, phosphorylation on Ser-44 by ATM activates PP1 by dissociating the PP1-PPP1R2 complex. Phosphorylation on Thr-73 by GSK3 activates PP1 by dissociating the PP1-PPP1R2 complex. Central nervous system.

In terms of biological role, inhibitor of protein-phosphatase 1. The polypeptide is Protein phosphatase inhibitor 2 (Ppp1r2) (Rattus norvegicus (Rat)).